The following is a 583-amino-acid chain: CTP synthase (583 aa).

Residues 1–278 (MRRHPQTATK…DAFVVRRLNL (278 aa)) form an amidoligase domain region. Serine 20 is a CTP binding site. Serine 20 is a UTP binding site. Residues 21 to 26 (SLGKGL) and aspartate 78 contribute to the ATP site. Mg(2+)-binding residues include aspartate 78 and glutamate 152. CTP-binding positions include 159–161 (DIE), 199–204 (KTKPTQ), and lysine 235. Residues 199–204 (KTKPTQ) and lysine 235 each bind UTP. The region spanning 303–551 (RIALVGKYVE…VKAAIDYKEG (249 aa)) is the Glutamine amidotransferase type-1 domain. Glycine 366 provides a ligand contact to L-glutamine. Cysteine 393 functions as the Nucleophile; for glutamine hydrolysis in the catalytic mechanism. L-glutamine contacts are provided by residues 394 to 397 (LGLQ), glutamate 416, and arginine 477. Catalysis depends on residues histidine 524 and glutamate 526. A disordered region spans residues 559–583 (PERVSNGAERRDQVGQSIPEPANRG).

The protein belongs to the CTP synthase family. In terms of assembly, homotetramer.

It carries out the reaction UTP + L-glutamine + ATP + H2O = CTP + L-glutamate + ADP + phosphate + 2 H(+). The catalysed reaction is L-glutamine + H2O = L-glutamate + NH4(+). It catalyses the reaction UTP + NH4(+) + ATP = CTP + ADP + phosphate + 2 H(+). It functions in the pathway pyrimidine metabolism; CTP biosynthesis via de novo pathway; CTP from UDP: step 2/2. With respect to regulation, allosterically activated by GTP, when glutamine is the substrate; GTP has no effect on the reaction when ammonia is the substrate. The allosteric effector GTP functions by stabilizing the protein conformation that binds the tetrahedral intermediate(s) formed during glutamine hydrolysis. Inhibited by the product CTP, via allosteric rather than competitive inhibition. Functionally, catalyzes the ATP-dependent amination of UTP to CTP with either L-glutamine or ammonia as the source of nitrogen. Regulates intracellular CTP levels through interactions with the four ribonucleotide triphosphates. The sequence is that of CTP synthase from Mycobacterium ulcerans (strain Agy99).